Reading from the N-terminus, the 430-residue chain is uncharacterized protein (430 aa).

The first 19 residues, 1–19 (MKILLFVVLFFNVLVGIYS), serve as a signal peptide directing secretion. The N-linked (GlcNAc...) asparagine glycan is linked to N39. Residues 119–408 (LDPNSSPSPS…ELLEKNSDGN (290 aa)) form a disordered region. Residues 124–168 (SPSPSPSPSPSPSPSPSPSPSPSPSPSPSPSPSPSPSPSPSPSPS) are compositionally biased toward pro residues. Composition is skewed to low complexity over residues 169 to 253 (PSSS…TPSQ) and 263 to 285 (PTPT…TQTP). Over residues 286 to 303 (ISSRPMSISTEKPSSSEE) the composition is skewed to polar residues. Residue N312 is glycosylated (N-linked (GlcNAc...) asparagine). Residues 316 to 325 (SEDKKKDSES) show a composition bias toward basic and acidic residues. Residues 326-370 (KSSQSESPSPSASASESESASESASASTSVSVSASPLPIMDSSSS) are compositionally biased toward low complexity. N408 carries an N-linked (GlcNAc...) asparagine glycan.

Its subcellular location is the secreted. This is an uncharacterized protein from Dictyostelium discoideum (Social amoeba).